Here is a 199-residue protein sequence, read N- to C-terminus: dITP/XTP pyrophosphatase (199 aa).

Ser12–Lys17 is a substrate binding site. Asp73 acts as the Proton acceptor in catalysis. Asp73 lines the Mg(2+) pocket. Substrate contacts are provided by residues Ser74, Phe157 to Asp160, Lys180, and His185 to Arg186.

This sequence belongs to the HAM1 NTPase family. As to quaternary structure, homodimer. Mg(2+) serves as cofactor.

It carries out the reaction XTP + H2O = XMP + diphosphate + H(+). The enzyme catalyses dITP + H2O = dIMP + diphosphate + H(+). It catalyses the reaction ITP + H2O = IMP + diphosphate + H(+). Pyrophosphatase that catalyzes the hydrolysis of nucleoside triphosphates to their monophosphate derivatives, with a high preference for the non-canonical purine nucleotides XTP (xanthosine triphosphate), dITP (deoxyinosine triphosphate) and ITP. Seems to function as a house-cleaning enzyme that removes non-canonical purine nucleotides from the nucleotide pool, thus preventing their incorporation into DNA/RNA and avoiding chromosomal lesions. This Neisseria meningitidis serogroup B (strain ATCC BAA-335 / MC58) protein is dITP/XTP pyrophosphatase.